The chain runs to 251 residues: 3-isopropylmalate dehydratase small subunit 1 (251 aa).

Residues 1–59 (MAASLQSANPTLSRTLASPNKPSSFATFRSPFLRFNSTSVASNFKPLVSREASSSFVTR) constitute a chloroplast transit peptide.

This sequence belongs to the LeuD family. As to quaternary structure, heterodimer of the large LEUC/IIL1 subunit and the small LEUD (SSU1, SSU2 or SSU3) subunits. As to expression, expressed at low levels in roots, root tips, at the basis of the hypocotyls, and in emerging leaves. In young seedlings, expressed in cotyledon epidermal cells. In hypocotyls, expressed in peripheral cells. In seedling roots, expressed in the epidermis, including root hairs, and throughout the cortex. In rosette leaves, expressed in the upper and lower epidermis. In roots of adult plants, expressed in the root tips and cortex of the mature root enclosing the stele. In flowering stalks, expressed in the epidermis. Expressed in the carpel epidermis.

The protein resides in the plastid. The protein localises to the chloroplast stroma. The enzyme catalyses (2R,3S)-3-isopropylmalate = (2S)-2-isopropylmalate. It participates in amino-acid biosynthesis; L-leucine biosynthesis; L-leucine from 3-methyl-2-oxobutanoate: step 2/4. In terms of biological role, catalyzes the isomerization between 2-isopropylmalate and 3-isopropylmalate, via the formation of 2-isopropylmaleate. Plays an essential role in leucine biosynthesis. Functions in both the biosynthesis of leucine, and in the methionine chain elongation pathway of aliphatic glucosinolate formation. Plays an essential role in female gametophyte development. This chain is 3-isopropylmalate dehydratase small subunit 1, found in Arabidopsis thaliana (Mouse-ear cress).